A 285-amino-acid chain; its full sequence is Small ribosomal subunit protein uS2 (285 aa).

Positions 231-285 (GGKSGQAAAEPMAEWERELLEQHNAQQAEQAEAPAAEAPAEPAEAPAAEAAPQGE) are disordered. Low complexity predominate over residues 255 to 285 (AQQAEQAEAPAAEAPAEPAEAPAAEAAPQGE).

It belongs to the universal ribosomal protein uS2 family.

The sequence is that of Small ribosomal subunit protein uS2 from Micrococcus luteus (strain ATCC 4698 / DSM 20030 / JCM 1464 / CCM 169 / CCUG 5858 / IAM 1056 / NBRC 3333 / NCIMB 9278 / NCTC 2665 / VKM Ac-2230) (Micrococcus lysodeikticus).